Reading from the N-terminus, the 275-residue chain is MSVAEYARDCAAQGLRGDYSVCRADFTVAQDYDYSDEEQAVWRTLCDRQTKLTRKLAHHSYLDGVEKLGLLDRIPDFEDVSTKLRKLTGWEIIAVPGLIPAAPFFDHLANRRFPVTNWLRTRQELDYIVEPDMFHDFFGHVPVLSQPVFADFMQMYGKKAGDIIALGGDEMITRLYWYTAEYGLVQEAGQPLKAFGAGLMSSFTELQFAVEGKDAHHVPFDLETVMRTGYEIDKFQRAYFVLPSFDALRDAFQTADFEAIVARRKDQKALDPATV.

Residues H135, H140, and E181 each contribute to the Fe cation site.

Belongs to the biopterin-dependent aromatic amino acid hydroxylase family. It depends on Fe(2+) as a cofactor.

The catalysed reaction is (6R)-L-erythro-5,6,7,8-tetrahydrobiopterin + L-phenylalanine + O2 = (4aS,6R)-4a-hydroxy-L-erythro-5,6,7,8-tetrahydrobiopterin + L-tyrosine. Its pathway is amino-acid degradation; L-phenylalanine degradation; acetoacetate and fumarate from L-phenylalanine: step 1/6. This chain is Phenylalanine-4-hydroxylase (phhA), found in Mesorhizobium japonicum (strain LMG 29417 / CECT 9101 / MAFF 303099) (Mesorhizobium loti (strain MAFF 303099)).